The chain runs to 368 residues: Anaphase-promoting complex subunit MND2 (368 aa).

Disordered regions lie at residues 140–167 and 286–336; these read AQNA…NGSI and RNPY…GITP. Residues 149–162 show a composition bias toward basic and acidic residues; the sequence is EDFRQHDSREEDPR. Serine 293 carries the post-translational modification Phosphoserine.

The protein belongs to the APC15 family. The APC/C is composed of at least 13 subunits that stay tightly associated throughout the cell cycle: APC1, APC2, APC4, APC5, APC9, APC11, CDC16, CDC23, CDC26, CDC27, DOC1, MND2 and SWM1. MND2 interacts directly with APC1, APC5 and CDC23.

The protein operates within protein modification; protein ubiquitination. Component of the anaphase promoting complex/cyclosome (APC/C), a cell cycle-regulated E3 ubiquitin-protein ligase complex that controls progression through mitosis and the G1 phase of the cell cycle. The APC/C is thought to confer substrate specificity and, in the presence of ubiquitin-conjugating E2 enzymes, it catalyzes the formation of protein-ubiquitin conjugates that are subsequently degraded by the 26S proteasome. In early mitosis, the APC/C is activated by CDC20 and targets securin PDS1, the B-type cyclin CLB5, and other anaphase inhibitory proteins for proteolysis, thereby triggering the separation of sister chromatids at the metaphase-to-anaphase transition. In late mitosis and in G1, degradation of CLB5 allows activation of the APC/C by CDH1, which is needed to destroy CDC20 and the B-type cyclin CLB2 to allow exit from mitosis and creating the low CDK state necessary for cytokinesis and for reforming prereplicative complexes in G1 prior to another round of replication. The protein is Anaphase-promoting complex subunit MND2 (MND2) of Saccharomyces cerevisiae (strain ATCC 204508 / S288c) (Baker's yeast).